The following is an 85-amino-acid chain: Protein U62 (85 aa).

It belongs to the herpesviridae UL91 family.

The protein is Protein U62 (U62) of Homo sapiens (Human).